Here is a 1187-residue protein sequence, read N- to C-terminus: Protein CHROMATIN REMODELING 8 (1187 aa).

The segment at 1 to 55 (MEEDEDQFLLSSLGVTSANPEDLEQKILDEATKKPDNDEGGSVEEKSTQLEGTNL) is disordered. Residues 9–19 (LLSSLGVTSAN) are compositionally biased toward polar residues. Residues 23–48 (LEQKILDEATKKPDNDEGGSVEEKST) show a composition bias toward basic and acidic residues. Residues 110–170 (LQHALATDRL…LKRKLKEIRK (61 aa)) adopt a coiled-coil conformation. Positions 162–169 (KRKLKEIR) match the Nuclear localization signal 1 motif. Disordered regions lie at residues 223-247 (GFER…DENE) and 273-343 (DAED…DGRR). 2 consecutive short sequence motifs (nuclear localization signal) follow at residues 290 to 297 (LRKLYKTP) and 310 to 317 (GKKSKKTR). The span at 305 to 328 (KKRKAGKKSKKTRPLPEKKWRKRI) shows a compositional bias: basic residues. The Helicase ATP-binding domain occupies 397–594 (WELHCQRAGG…WSLFDFVFPG (198 aa)). 410-417 (DEMGLGKT) serves as a coordination point for ATP. The tract at residues 467–501 (SAQDSGHGKGQGKASESDYDSESSVDSDHEPKSKN) is disordered. Residues 492 to 501 (DSDHEPKSKN) show a composition bias toward basic and acidic residues. The DEGH box motif lies at 545–548 (DEGH). The 161-residue stretch at 730-890 (KVVAEVLKVW…RRFFKARDMK (161 aa)) folds into the Helicase C-terminal domain. A coiled-coil region spans residues 987–1016 (NANDEEEKMRLEHQASQVAQRAAEALRQSR). The span at 1050–1059 (VNSRLTQTGD) shows a compositional bias: polar residues. The segment at 1050–1075 (VNSRLTQTGDKPSAIKNGISAGLSSG) is disordered.

The protein belongs to the SNF2/RAD54 helicase family. In terms of assembly, homodimer. Binds DNA.

It is found in the nucleus. Essential factor involved in transcription-coupled nucleotide excision repair (TCR) which allows RNA polymerase II-blocking lesions to be rapidly removed from the transcribed strand of active genes. Upon DNA-binding, it locally modifies DNA conformation by wrapping the DNA around itself, thereby modifying the interface between stalled RNA polymerase II and DNA. It is required for transcription-coupled repair complex formation. This is Protein CHROMATIN REMODELING 8 from Arabidopsis thaliana (Mouse-ear cress).